A 257-amino-acid polypeptide reads, in one-letter code: MALVVKDDVKISEFINLSAAEKFLPAVMTSVKTVRISKVDKVIAMENDSLSDVNLLKGVKLVKDGYVCLAGLVVSGEWNLPDNCRGGVSVCLVDKRMQRDDEATLGSYRTSAAKKRFAFKLIPNYSITTADAERKVWQVLVNIRGVAMEKGFCPLSLEFVSVCIVHKSNIKLGLREKITSVSEGGPVELTEAVVDEFIESVPMADRLRKFRNQSKKGSNKYVGKRNDNKGLNKEGKLFDKVRIGQNSESSDAESSSF.

The disordered stretch occupies residues 212-257; that stretch reads NQSKKGSNKYVGKRNDNKGLNKEGKLFDKVRIGQNSESSDAESSSF. The span at 224-242 shows a compositional bias: basic and acidic residues; it reads KRNDNKGLNKEGKLFDKVR. Low complexity predominate over residues 247 to 257; that stretch reads SESSDAESSSF.

It belongs to the tobamovirus movement protein family.

The protein resides in the host cytoplasm. Its subcellular location is the host cytoskeleton. The protein localises to the host cell junction. It localises to the host plasmodesma. Its function is as follows. Transports viral genome to neighboring plant cells directly through plasmosdesmata, without any budding. The movement protein allows efficient cell to cell propagation, by bypassing the host cell wall barrier. Forms a ribonucleoprotein complex with viral RNA. Binds microtubules and modulates microtubule stability. Can bind double-stranded DNA. The protein is Movement protein (MP) of Pepper mild mottle virus (strain Spain) (PMMV-S).